The sequence spans 818 residues: Protein Cep78 homolog (818 aa).

Disordered regions lie at residues 513–589, 691–748, and 768–798; these read LDVE…HEFA, RQAN…TEAT, and KQSE…DQNV. Acidic residues predominate over residues 514-539; that stretch reads DVEEEEEEEEEEQQAEESQSESEPQN. Residues 561–589 show a composition bias toward basic and acidic residues; the sequence is VRSEIKYVENNPKEAAKKNRESKSDHEFA. Positions 782 to 792 are enriched in gly residues; that stretch reads GDAGGGGGSGD.

Belongs to the CEP78 family.

It is found in the cytoplasm. It localises to the cytoskeleton. Its subcellular location is the microtubule organizing center. The protein resides in the centrosome. The protein localises to the centriole. It is found in the cilium basal body. May play a role in cilium biogenesis. In Drosophila melanogaster (Fruit fly), this protein is Protein Cep78 homolog.